A 467-amino-acid polypeptide reads, in one-letter code: ATP-dependent protease ATPase subunit HslU (467 aa).

Residues V22 and 64–69 contribute to the ATP site; that span reads GVGKTE. Residues 149–192 form a disordered region; it reads QTNNPLESLFGGAIPNFGQNNEDEEEPPTEEIKTKRSEIKRQLE. Over residues 178 to 192 the composition is skewed to basic and acidic residues; it reads EEIKTKRSEIKRQLE. ATP is bound by residues D280, E345, and R417.

The protein belongs to the ClpX chaperone family. HslU subfamily. In terms of assembly, a double ring-shaped homohexamer of HslV is capped on each side by a ring-shaped HslU homohexamer. The assembly of the HslU/HslV complex is dependent on binding of ATP.

The protein localises to the cytoplasm. In terms of biological role, ATPase subunit of a proteasome-like degradation complex; this subunit has chaperone activity. The binding of ATP and its subsequent hydrolysis by HslU are essential for unfolding of protein substrates subsequently hydrolyzed by HslV. HslU recognizes the N-terminal part of its protein substrates and unfolds these before they are guided to HslV for hydrolysis. This chain is ATP-dependent protease ATPase subunit HslU, found in Staphylococcus aureus (strain MRSA252).